A 113-amino-acid chain; its full sequence is Putative pterin-4-alpha-carbinolamine dehydratase (113 aa).

This sequence belongs to the pterin-4-alpha-carbinolamine dehydratase family.

The catalysed reaction is (4aS,6R)-4a-hydroxy-L-erythro-5,6,7,8-tetrahydrobiopterin = (6R)-L-erythro-6,7-dihydrobiopterin + H2O. In Bordetella bronchiseptica (strain ATCC BAA-588 / NCTC 13252 / RB50) (Alcaligenes bronchisepticus), this protein is Putative pterin-4-alpha-carbinolamine dehydratase.